The following is a 1091-amino-acid chain: MLFDKLITNTAEAVLQKMDDMKKMRRQRMRELEDLGVFNETEESNLNMYTRGKQKDIQRTDEETTDNQEGSVESSEEGEDQEHEDDGEDEDDEDEDDDDDDDDDDDDDEDDEDEEDGEEDNQKRYYLRQRKATVYYQAPLEKPRHQRKPNIFYSGPASPARPRYRLSSAGPRSPYCKRMNRRRHAIHSSDSTSSSSSEDEQHFERRRKRSRNRAINRYLPLNFRKDELKGIYKDRMKIGASLADVDPMQLDSSVRFDSVGGLSNHIAALKEMVVFPLLYPEVFEKFKIQPPRGCLFYGPPGTGKTLVARALANECSQGDKRVAFFMRKGADCLSKWVGESERQLRLLFDQAYQMRPSIIFFDEIDGLAPVRSSRQDQIHSSIVSTLLALMDGLDSRGEIVVIGATNRLDAIDPALRRPGRFDREFLFSLPDKEARKEILKIHTRDWNPKPLDTFLEELAENCVGYRGADIKSICAEAALCALRRRYPQIYTTSEKLQLDLSSINISAKDFEVAMQKMIPASQRAVTSPGQALSTVVKPLLQNTVDKILEALQRVFPHAEFRTNKTLDSDISCPLLESDLAYSDDDVPSVYENGLSQKSSHKAKDNFNFLHLNRNACYQPMSFRPRILIVGEPGFGQGSHLAPAVIHALEKFTVYTLDIPVLFGVSATSPEETCAQVIREAKRTAPSIVYVPHIHVWWEIVGPTLKATFTTLLQNIPSFAPVLLLATSDKSHSALPEEVQELFIRDYGEIFNVQLPGKEERTKFFEDLILKQAAKPPISKKKAVLQALEVLPVAPPPEPRSLTAEEVKRLEEQEEDTFRELRIFLRNVTHRLAIDKRFRVFTKPVDPDEVPDYVTVIKQPMDLSSVISKIDLHKYLTVKDYLRDIDLICSNALEYNPDRDPGDRLIRHRACALRDTAYAIIKEELDEDFEQLCEEIQESRKKRGCSSSKYAPSYYHVMPKQNSTLVGDKRSDPEQNEKLKTPSTPVACSTPEMCVLRMTRARRSQVEQQQLISVEKALAILSQPTPSLVVDHERLKNLLKTVVKKSRNYNIFQLENLYAVISQCIYQHRKDYDKTSLIQKMEQEVENFSCSR.

The tract at residues 32 to 211 (LEDLGVFNET…HFERRRKRSR (180 aa)) is disordered. The segment covering 53–62 (KQKDIQRTDE) has biased composition (basic and acidic residues). A compositionally biased stretch (acidic residues) spans 74–119 (SSEEGEDQEHEDDGEDEDDEDEDDDDDDDDDDDDDEDDEDEEDGEE). A Glycyl lysine isopeptide (Lys-Gly) (interchain with G-Cter in SUMO2) cross-link involves residue K148. Residues S158, S168, S173, and S241 each carry the phosphoserine modification. 298 to 305 (GPPGTGKT) provides a ligand contact to ATP. Phosphoserine is present on residues S577 and S582. Coiled coils occupy residues 801–825 (LTAEEVKRLEEQEEDTFRELRIFLR) and 917–943 (YAIIKEELDEDFEQLCEEIQESRKKRG). One can recognise a Bromo domain in the interval 811–923 (EQEEDTFREL…DTAYAIIKEE (113 aa)). Residue K959 forms a Glycyl lysine isopeptide (Lys-Gly) (interchain with G-Cter in SUMO2) linkage. Residues 961-985 (NSTLVGDKRSDPEQNEKLKTPSTPV) are disordered. A compositionally biased stretch (basic and acidic residues) spans 966-979 (GDKRSDPEQNEKLK). S970 is modified (phosphoserine). A Glycyl lysine isopeptide (Lys-Gly) (interchain with G-Cter in SUMO2) cross-link involves residue K979. Phosphothreonine is present on residues T980 and T983. Residue S1003 is modified to Phosphoserine. Position 1024 is a phosphothreonine (T1024).

Belongs to the AAA ATPase family. Interaction with ESR1 and NCOA3 is enhanced by estradiol. Interacts with acetylated lysine residues on histone H1.4, H2A, H2B and H3 (in vitro).

Its subcellular location is the nucleus. It catalyses the reaction ATP + H2O = ADP + phosphate + H(+). Functionally, may be a transcriptional coactivator of the nuclear receptor ESR1 required to induce the expression of a subset of estradiol target genes, such as CCND1, MYC and E2F1. May play a role in the recruitment or occupancy of CREBBP at some ESR1 target gene promoters. May be required for histone hyperacetylation. The polypeptide is ATPase family AAA domain-containing protein 2 (ATAD2) (Pongo abelii (Sumatran orangutan)).